Reading from the N-terminus, the 316-residue chain is 4-hydroxy-3-methylbut-2-enyl diphosphate reductase (316 aa).

Cys-12 contributes to the [4Fe-4S] cluster binding site. (2E)-4-hydroxy-3-methylbut-2-enyl diphosphate contacts are provided by His-41 and His-74. Dimethylallyl diphosphate-binding residues include His-41 and His-74. Residues His-41 and His-74 each contribute to the isopentenyl diphosphate site. Cys-96 contacts [4Fe-4S] cluster. His-124 contacts (2E)-4-hydroxy-3-methylbut-2-enyl diphosphate. His-124 provides a ligand contact to dimethylallyl diphosphate. Isopentenyl diphosphate is bound at residue His-124. The active-site Proton donor is the Glu-126. Thr-167 is a (2E)-4-hydroxy-3-methylbut-2-enyl diphosphate binding site. Cys-197 contacts [4Fe-4S] cluster. Residues Ser-225, Ser-226, Asn-227, and Ser-269 each contribute to the (2E)-4-hydroxy-3-methylbut-2-enyl diphosphate site. Positions 225, 226, 227, and 269 each coordinate dimethylallyl diphosphate. Residues Ser-225, Ser-226, Asn-227, and Ser-269 each coordinate isopentenyl diphosphate.

Belongs to the IspH family. Homodimer. It depends on [4Fe-4S] cluster as a cofactor.

The catalysed reaction is isopentenyl diphosphate + 2 oxidized [2Fe-2S]-[ferredoxin] + H2O = (2E)-4-hydroxy-3-methylbut-2-enyl diphosphate + 2 reduced [2Fe-2S]-[ferredoxin] + 2 H(+). The enzyme catalyses dimethylallyl diphosphate + 2 oxidized [2Fe-2S]-[ferredoxin] + H2O = (2E)-4-hydroxy-3-methylbut-2-enyl diphosphate + 2 reduced [2Fe-2S]-[ferredoxin] + 2 H(+). Its pathway is isoprenoid biosynthesis; dimethylallyl diphosphate biosynthesis; dimethylallyl diphosphate from (2E)-4-hydroxy-3-methylbutenyl diphosphate: step 1/1. It functions in the pathway isoprenoid biosynthesis; isopentenyl diphosphate biosynthesis via DXP pathway; isopentenyl diphosphate from 1-deoxy-D-xylulose 5-phosphate: step 6/6. Catalyzes the conversion of 1-hydroxy-2-methyl-2-(E)-butenyl 4-diphosphate (HMBPP) into a mixture of isopentenyl diphosphate (IPP) and dimethylallyl diphosphate (DMAPP). Acts in the terminal step of the DOXP/MEP pathway for isoprenoid precursor biosynthesis. The polypeptide is 4-hydroxy-3-methylbut-2-enyl diphosphate reductase (Escherichia coli (strain ATCC 8739 / DSM 1576 / NBRC 3972 / NCIMB 8545 / WDCM 00012 / Crooks)).